The following is a 291-amino-acid chain: MKKIRIGSRDSKLAIIQSELIMSAIRKYDPDIELELITMKTTGDKILDKTLDKIEGKGLFVKELDNALYNNEVDITVHSYKDMPLEENPELPVVALSKREDPRDAFILPQNGENGEPIGSSSLRRQLQLKELFPGCKTAPIRGNVQTRLKKLDSGEFSAIVLAAAGIKRLGLESRIGRYFSVDEILPAASQGIIAVQGRVGENFDFLKLFHSEESLCISLAERTFVREMNGGCSTPIAAYATIQGSEIILKGLYCNETTGELRKECVSGNRNNPVELGYELVKKMKSSKSI.

Residue Cys-233 is modified to S-(dipyrrolylmethanemethyl)cysteine.

It belongs to the HMBS family. Monomer. The cofactor is dipyrromethane.

The catalysed reaction is 4 porphobilinogen + H2O = hydroxymethylbilane + 4 NH4(+). It participates in porphyrin-containing compound metabolism; protoporphyrin-IX biosynthesis; coproporphyrinogen-III from 5-aminolevulinate: step 2/4. Functionally, tetrapolymerization of the monopyrrole PBG into the hydroxymethylbilane pre-uroporphyrinogen in several discrete steps. This is Porphobilinogen deaminase (hemC) from Ruminiclostridium josui (Clostridium josui).